We begin with the raw amino-acid sequence, 632 residues long: Glycerophosphodiester phosphodiesterase domain-containing protein 4 (632 aa).

Over 1-64 (MEETQDSSSS…GSCCCSRKEQ (64 aa)) the chain is Cytoplasmic. A helical transmembrane segment spans residues 65–85 (FFYMCLVIAFILSVLFLFVWV). Topologically, residues 86-114 (ETSNEYNGFDWVVYLGTGCWFFWSILVLS) are extracellular. A helical transmembrane segment spans residues 115 to 135 (AAGIMVAYTTLLLLLGFLLLW). Over 136–147 (ERIELNLHTSHK) the chain is Cytoplasmic. A helical transmembrane segment spans residues 148-168 (VFICLVIVLCSFLLAVLSHFW). The Extracellular segment spans residues 169–180 (KDKWLIAGLSLQ). The helical transmembrane segment at 181 to 201 (IFAPFVHLSLITVMIIISWPL) threads the bilayer. At 202-240 (SICVARLESEVKVRRYRMADYEQEIQERCNVFQRLRALQ) the chain is on the cytoplasmic side. A helical transmembrane segment spans residues 241-261 (IAAGLSFLIILLCLYLMPLGI). The Extracellular portion of the chain corresponds to 262–542 (YSPCILKKEN…SRPLFFMTPG (281 aa)). The 258-residue stretch at 276 to 533 (PTLFGHRGAP…DNIELLNQLS (258 aa)) folds into the GP-PDE domain. Residues Glu308, Asp310, and His323 each contribute to the a divalent metal cation site. Asn343, Asn349, Asn384, and Asn473 each carry an N-linked (GlcNAc...) asparagine glycan. A helical membrane pass occupies residues 543–563 (FYMFMWLFLDIASAVIIGFVF). Residues 564-632 (CYNWIKEIKR…QKTEPKTENL (69 aa)) are Cytoplasmic-facing. A disordered region spans residues 596-632 (ENNDASQQKPEVAPTSANLAPENMIELQKTEPKTENL). Over residues 623–632 (QKTEPKTENL) the composition is skewed to basic and acidic residues.

Belongs to the glycerophosphoryl diester phosphodiesterase family. Detected in testis, in particular in spermatocytes.

The protein localises to the cytoplasm. It is found in the membrane. The chain is Glycerophosphodiester phosphodiesterase domain-containing protein 4 (Gdpd4) from Mus musculus (Mouse).